The chain runs to 338 residues: Phenylalanine--tRNA ligase alpha subunit (338 aa).

A Mg(2+)-binding site is contributed by glutamate 259.

Belongs to the class-II aminoacyl-tRNA synthetase family. Phe-tRNA synthetase alpha subunit type 1 subfamily. In terms of assembly, tetramer of two alpha and two beta subunits. It depends on Mg(2+) as a cofactor.

It localises to the cytoplasm. It catalyses the reaction tRNA(Phe) + L-phenylalanine + ATP = L-phenylalanyl-tRNA(Phe) + AMP + diphosphate + H(+). The sequence is that of Phenylalanine--tRNA ligase alpha subunit from Janthinobacterium sp. (strain Marseille) (Minibacterium massiliensis).